A 95-amino-acid polypeptide reads, in one-letter code: uncharacterized protein (95 aa).

This is an uncharacterized protein from Enterobacteria phage T4 (Bacteriophage T4).